Here is a 517-residue protein sequence, read N- to C-terminus: Crotonobetaine/carnitine--CoA ligase (517 aa).

It belongs to the ATP-dependent AMP-binding enzyme family.

It carries out the reaction 4-(trimethylamino)butanoate + ATP + CoA = 4-(trimethylamino)butanoyl-CoA + AMP + diphosphate. The enzyme catalyses crotonobetaine + ATP + CoA = crotonobetainyl-CoA + AMP + diphosphate. It catalyses the reaction (R)-carnitine + ATP + CoA = (R)-carnitinyl-CoA + AMP + diphosphate. The protein operates within amine and polyamine metabolism; carnitine metabolism. Catalyzes the transfer of CoA to carnitine, generating the initial carnitinyl-CoA needed for the CaiB reaction cycle. Also has activity toward crotonobetaine and gamma-butyrobetaine. This chain is Crotonobetaine/carnitine--CoA ligase, found in Citrobacter koseri (strain ATCC BAA-895 / CDC 4225-83 / SGSC4696).